Here is a 544-residue protein sequence, read N- to C-terminus: Hydroxylamine reductase (544 aa).

[4Fe-4S] cluster is bound by residues Cys-3, Cys-6, Cys-15, and Cys-21. 8 residues coordinate hybrid [4Fe-2O-2S] cluster: His-244, Glu-268, Cys-313, Cys-400, Cys-428, Cys-453, Glu-487, and Lys-489. Cys-400 is subject to Cysteine persulfide.

Belongs to the HCP family. The cofactor is [4Fe-4S] cluster. It depends on hybrid [4Fe-2O-2S] cluster as a cofactor.

The protein localises to the cytoplasm. The catalysed reaction is A + NH4(+) + H2O = hydroxylamine + AH2 + H(+). Its function is as follows. Catalyzes the reduction of hydroxylamine to form NH(3) and H(2)O. The chain is Hydroxylamine reductase from Trichormus variabilis (strain ATCC 29413 / PCC 7937) (Anabaena variabilis).